A 445-amino-acid chain; its full sequence is tRNA-2-methylthio-N(6)-dimethylallyladenosine synthase (445 aa).

The region spanning 9 to 125 (LKYRILTYGC…LPYLIARAKE (117 aa)) is the MTTase N-terminal domain. C18, C54, C88, C162, C166, and C169 together coordinate [4Fe-4S] cluster. The 231-residue stretch at 148–378 (RKPGLSAFVN…NRRQYQIATE (231 aa)) folds into the Radical SAM core domain. Residues 381 to 444 (QELQGSIQEV…TFSLFGEIFN (64 aa)) enclose the TRAM domain.

This sequence belongs to the methylthiotransferase family. MiaB subfamily. Monomer. Requires [4Fe-4S] cluster as cofactor.

The protein resides in the cytoplasm. It catalyses the reaction N(6)-dimethylallyladenosine(37) in tRNA + (sulfur carrier)-SH + AH2 + 2 S-adenosyl-L-methionine = 2-methylsulfanyl-N(6)-dimethylallyladenosine(37) in tRNA + (sulfur carrier)-H + 5'-deoxyadenosine + L-methionine + A + S-adenosyl-L-homocysteine + 2 H(+). In terms of biological role, catalyzes the methylthiolation of N6-(dimethylallyl)adenosine (i(6)A), leading to the formation of 2-methylthio-N6-(dimethylallyl)adenosine (ms(2)i(6)A) at position 37 in tRNAs that read codons beginning with uridine. In Syntrophomonas wolfei subsp. wolfei (strain DSM 2245B / Goettingen), this protein is tRNA-2-methylthio-N(6)-dimethylallyladenosine synthase.